Reading from the N-terminus, the 451-residue chain is Glyceraldehyde-3-phosphate dehydrogenase B, chloroplastic (451 aa).

The transit peptide at 1–83 (MASHAALAPS…AAPVRGETVA (83 aa)) directs the protein to the chloroplast. NADP(+) is bound by residues 94–95 (RI), Asp-118, and Arg-163. D-glyceraldehyde 3-phosphate contacts are provided by residues 237 to 239 (SCT), Thr-268, Arg-283, 296 to 297 (TG), and Arg-319. Residue Cys-238 is the Nucleophile of the active site. An NADP(+)-binding site is contributed by Asn-402.

It belongs to the glyceraldehyde-3-phosphate dehydrogenase family. Tetramer of either four A chains (GAPDH 2) or two A and two B chains (GAPDH 1).

It localises to the plastid. The protein localises to the chloroplast. The enzyme catalyses D-glyceraldehyde 3-phosphate + phosphate + NADP(+) = (2R)-3-phospho-glyceroyl phosphate + NADPH + H(+). Its pathway is carbohydrate biosynthesis; Calvin cycle. This is Glyceraldehyde-3-phosphate dehydrogenase B, chloroplastic (GAPB) from Spinacia oleracea (Spinach).